A 131-amino-acid polypeptide reads, in one-letter code: Holo-[acyl-carrier-protein] synthase (131 aa).

Mg(2+)-binding residues include Asp8 and Glu59.

It belongs to the P-Pant transferase superfamily. AcpS family. Mg(2+) serves as cofactor.

It is found in the cytoplasm. It carries out the reaction apo-[ACP] + CoA = holo-[ACP] + adenosine 3',5'-bisphosphate + H(+). Its function is as follows. Transfers the 4'-phosphopantetheine moiety from coenzyme A to a Ser of acyl-carrier-protein. The chain is Holo-[acyl-carrier-protein] synthase from Orientia tsutsugamushi (strain Ikeda) (Rickettsia tsutsugamushi).